The sequence spans 181 residues: Regulator of G-protein signaling 5 (181 aa).

In terms of domain architecture, RGS spans 64-180; that stretch reads SLDKLLQSNY…VRSEFYKELI (117 aa).

It localises to the cytoplasm. The protein localises to the membrane. Functionally, inhibits signal transduction by increasing the GTPase activity of G protein alpha subunits thereby driving them into their inactive GDP-bound form. Binds to G(i)-alpha and G(o)-alpha, but not to G(s)-alpha. The sequence is that of Regulator of G-protein signaling 5 (Rgs5) from Rattus norvegicus (Rat).